Reading from the N-terminus, the 101-residue chain is Secreted RxLR effector protein 64 (101 aa).

The first 23 residues, 1-23 (MMSPPMTTTLMFILNYAIISFHG), serve as a signal peptide directing secretion. The short motif at 48–51 (RELR) is the RxLR element. Residues 67–87 (LQPILPLPLCLPFPLVPASIF) form a helical membrane-spanning segment.

Belongs to the RxLR effector family.

It localises to the secreted. The protein localises to the host cytoplasm. It is found in the host nucleus. Its subcellular location is the membrane. Effector that acts as a broad suppressor of cell death to interrupt plant immunity. Inhibits cell death induced by cell death-inducing proteins, including the PAMP elicitor INF1 from P.infestans. This Plasmopara viticola (Downy mildew of grapevine) protein is Secreted RxLR effector protein 64.